The chain runs to 532 residues: Putative L-lactate permease (532 aa).

The next 14 membrane-spanning stretches (helical) occupy residues 23 to 43 (ALPS…VHLL), 56 to 76 (VVSA…AILF), 101 to 121 (VAQL…ASGF), 129 to 149 (APIL…ALIM), 152 to 172 (VPVS…ALKL), 180 to 200 (IGSI…LLAL), 213 to 233 (IVFI…IAQV), 234 to 254 (NYEF…VWAA), 274 to 294 (AGEV…LIVT), 346 to 366 (LLYV…IPFF), 387 to 407 (PFIA…GGEH), 420 to 440 (ISGS…SFFS), 462 to 482 (GISV…GNMV), and 508 to 528 (IIPM…LVPL).

Belongs to the lactate permease family.

The protein resides in the cell inner membrane. May play a role in L-lactate transport. The protein is Putative L-lactate permease of Haemophilus influenzae (strain ATCC 51907 / DSM 11121 / KW20 / Rd).